The primary structure comprises 61 residues: Small ribosomal subunit protein uS14 (61 aa).

Residues cysteine 24, cysteine 27, cysteine 40, and cysteine 43 each contribute to the Zn(2+) site.

The protein belongs to the universal ribosomal protein uS14 family. Zinc-binding uS14 subfamily. In terms of assembly, part of the 30S ribosomal subunit. Contacts proteins S3 and S10. It depends on Zn(2+) as a cofactor.

Functionally, binds 16S rRNA, required for the assembly of 30S particles and may also be responsible for determining the conformation of the 16S rRNA at the A site. This chain is Small ribosomal subunit protein uS14, found in Geobacter sp. (strain M21).